Here is a 320-residue protein sequence, read N- to C-terminus: Ferrochelatase (320 aa).

The Fe cation site is built by His-194 and Glu-275.

It belongs to the ferrochelatase family. Monomer.

It is found in the cytoplasm. The catalysed reaction is heme b + 2 H(+) = protoporphyrin IX + Fe(2+). It functions in the pathway porphyrin-containing compound metabolism; protoheme biosynthesis; protoheme from protoporphyrin-IX: step 1/1. Catalyzes the ferrous insertion into protoporphyrin IX. In Salmonella schwarzengrund (strain CVM19633), this protein is Ferrochelatase.